The sequence spans 526 residues: Acid-sensing ion channel 1 (526 aa).

Over 1 to 49 (MELKTEEEEVGGVQPVSIQAFASSSTLHGLAHIFSYERLSLKRALWALC) the chain is Cytoplasmic. A helical transmembrane segment spans residues 50–66 (FLGSLAVLLCVCTERVQ). Residues 67–425 (YYFCYHHVTK…ETIEQKKAYE (359 aa)) lie on the Extracellular side of the membrane. 7 disulfides stabilise this stretch: cysteine 93-cysteine 194, cysteine 172-cysteine 179, cysteine 290-cysteine 365, cysteine 308-cysteine 361, cysteine 312-cysteine 359, cysteine 321-cysteine 343, and cysteine 323-cysteine 335. N-linked (GlcNAc...) asparagine glycans are attached at residues asparagine 366 and asparagine 393. The chain crosses the membrane as a discontinuously helical span at residues 426 to 456 (IAGLLGDIGGQMGLFIGASILTVLELFDYAY). The GAS motif; ion selectivity filter signature appears at 442–444 (GAS). Residues 457–526 (EVIKHRLCRR…ARGTFEDFTC (70 aa)) lie on the Cytoplasmic side of the membrane. Phosphoserine; by PKA is present on serine 477. Phosphoserine is present on serine 497.

It belongs to the amiloride-sensitive sodium channel (TC 1.A.6) family. ASIC1 subfamily. As to quaternary structure, homotrimer. Heterotrimer; with other ASIC proteins producing channel with different properties. Interacts with PICK1; regulates ASIC1 clustering in membranes. Interacts with STOM; alters heterotrimeric ASIC channels activity. PH-gating could be regulated by serine proteases. Post-translationally, phosphorylation by PKA regulates interaction with PICK1 and subcellular localization. Phosphorylation by PKC may regulate the channel. As to expression, expressed in brain areas receiving strong excitatory corticofugal input. In hippocampus, expressed in the hilus of the dentate gyrus. In the cerebral cortex expressed in anterior and posterior cingulate cortex, sensory and motor cortices. In the sensory cortex strongest expression is detected in the whisker barrel field. In sensorimotor and cingulate cortex expression is elevated in layer III. Also expressed in basal ganglia, striatum, ventral pallidum, olfactory tubercle, and nucleus accumbens. Weakly expressed in thalamus with the exception of the habenula and the medial septal nuclei. In olfactory bulb, preferentially expressed in the glomerular layer, within glomeruli. Expressed in cerebellum in the molecular and granule cell layers. Strongly expressed in amygdala complex, particularly in the lateral and basolateral nuclei. Isoform 1 is more abundant in brain compared to isoform 2 (at protein level). Expressed in the nodose ganglion and dorsal root ganglion. Expressed in dendritic spine cells.

It is found in the cell membrane. Its subcellular location is the postsynaptic cell membrane. The protein resides in the cell projection. The protein localises to the dendrite. It catalyses the reaction Na(+)(in) = Na(+)(out). The enzyme catalyses Ca(2+)(in) = Ca(2+)(out). The catalysed reaction is K(+)(in) = K(+)(out). It carries out the reaction Li(+)(in) = Li(+)(out). Its activity is regulated as follows. Inhibited by the diuretic drug amiloride. With respect to regulation, the activity of the channel is sensitive to rapid decrease in osmotic pressure. Functionally, forms voltage-independent, pH-gated trimeric sodium channels that act as postsynaptic excitatory receptors in the nervous system, playing a crucial role in regulating synaptic plasticity, learning, and memory. Upon extracellular pH drop this channel elicits transient, fast activating, and completely desensitizing inward currents. Displays high selectivity for sodium ions but can also permit the permeation of other cations. Regulates more or less directly intracellular calcium concentration and CaMKII phosphorylation, and thereby the density of dendritic spines. Modulates neuronal activity in the circuits underlying innate fear. Its function is as follows. Has high selectivity for sodium ions but is also potentially permeable to other cations including potassium. Could function in cochlear mechanoelectrical transduction. This Mus musculus (Mouse) protein is Acid-sensing ion channel 1.